The sequence spans 53 residues: uncharacterized protein (53 aa).

A helical membrane pass occupies residues 13–35; the sequence is FLLHSFTFPIAHCPSFSWASFFF.

It localises to the membrane. This is an uncharacterized protein from Saccharomyces cerevisiae (strain ATCC 204508 / S288c) (Baker's yeast).